A 453-amino-acid polypeptide reads, in one-letter code: MQVKETVADGLKREFEVTLQAADIGAKVAARLDDMKDKVRLNGFRPGKVPIGHLKRIYGRSVTAETVEKLIRETNDQIFTERGFRLATEPKITMPSKENEVEEILAGKSDLNYTVAVEVVPTIELADFKSFSVEKPVAEVADSDVDEAINRIAMGNRSYADKGEGAKAESGDRVTISFKGTIDGTPFDGGTGEGIQVVIGSATFIPGFEDQLIGIGAGETRTLKVEFPKNYTNAELAGKPAEFETTATVLEAPQESVIDDEFAKTLGFESLDKLKEAARGRLTAEYAGATRQRVKRVLLDRLDETHRFEAPPSLVEQEFDLMWRSIKAEMESGGKTFESENTTEEAAKEEYRKIADRRVRLGLVLSEIGEKNKITVTDDEVSRAVIERARQMPGHEKEVWEYYRNNAEALAQLRAPIYEDKVVDFILELANVTEKTVSREELYKDDDAEKTAA.

The PPIase FKBP-type domain maps to 171–256; sequence GDRVTISFKG…ATVLEAPQES (86 aa).

It belongs to the FKBP-type PPIase family. Tig subfamily.

Its subcellular location is the cytoplasm. It carries out the reaction [protein]-peptidylproline (omega=180) = [protein]-peptidylproline (omega=0). Functionally, involved in protein export. Acts as a chaperone by maintaining the newly synthesized protein in an open conformation. Functions as a peptidyl-prolyl cis-trans isomerase. The sequence is that of Trigger factor from Rhodopseudomonas palustris (strain BisB18).